The following is a 267-amino-acid chain: Thymidylate synthase (267 aa).

Arg-25 is a dUMP binding site. (6R)-5,10-methylene-5,6,7,8-tetrahydrofolate is bound at residue His-55. 130–131 (RR) contributes to the dUMP binding site. Cys-150 serves as the catalytic Nucleophile. Residues 170–173 (RSAD), Asn-181, and 211–213 (HIY) contribute to the dUMP site. (6R)-5,10-methylene-5,6,7,8-tetrahydrofolate is bound at residue Asp-173. Ala-266 provides a ligand contact to (6R)-5,10-methylene-5,6,7,8-tetrahydrofolate.

This sequence belongs to the thymidylate synthase family. Bacterial-type ThyA subfamily. Homodimer.

The protein localises to the cytoplasm. The catalysed reaction is dUMP + (6R)-5,10-methylene-5,6,7,8-tetrahydrofolate = 7,8-dihydrofolate + dTMP. It functions in the pathway pyrimidine metabolism; dTTP biosynthesis. Catalyzes the reductive methylation of 2'-deoxyuridine-5'-monophosphate (dUMP) to 2'-deoxythymidine-5'-monophosphate (dTMP) while utilizing 5,10-methylenetetrahydrofolate (mTHF) as the methyl donor and reductant in the reaction, yielding dihydrofolate (DHF) as a by-product. This enzymatic reaction provides an intracellular de novo source of dTMP, an essential precursor for DNA biosynthesis. In Corynebacterium efficiens (strain DSM 44549 / YS-314 / AJ 12310 / JCM 11189 / NBRC 100395), this protein is Thymidylate synthase.